A 346-amino-acid chain; its full sequence is NADH-quinone oxidoreductase subunit H (346 aa).

The next 9 membrane-spanning stretches (helical) occupy residues 13–33 (ILLI…ALAF), 51–71 (PNVV…KYIV), 83–103 (AVYF…WAVI), 116–136 (VAVL…IMGG), 162–182 (IGLI…TAIV), 191–211 (LLNW…ISAL), 244–264 (FMIG…LLFF), 278–298 (VFWM…VKAI), and 310–330 (LGWK…AFMA).

This sequence belongs to the complex I subunit 1 family. In terms of assembly, NDH-1 is composed of 14 different subunits. Subunits NuoA, H, J, K, L, M, N constitute the membrane sector of the complex.

The protein resides in the cell inner membrane. The enzyme catalyses a quinone + NADH + 5 H(+)(in) = a quinol + NAD(+) + 4 H(+)(out). In terms of biological role, NDH-1 shuttles electrons from NADH, via FMN and iron-sulfur (Fe-S) centers, to quinones in the respiratory chain. The immediate electron acceptor for the enzyme in this species is believed to be ubiquinone. Couples the redox reaction to proton translocation (for every two electrons transferred, four hydrogen ions are translocated across the cytoplasmic membrane), and thus conserves the redox energy in a proton gradient. This subunit may bind ubiquinone. This Jannaschia sp. (strain CCS1) protein is NADH-quinone oxidoreductase subunit H.